Here is a 349-residue protein sequence, read N- to C-terminus: Probable myosin light chain kinase DDB_G0275057 (349 aa).

Positions M1–A33 are disordered. The span at T16 to A33 shows a compositional bias: low complexity. Residues Y56–L313 enclose the Protein kinase domain. ATP is bound by residues L62–V70 and K85. D178 functions as the Proton acceptor in the catalytic mechanism.

It belongs to the protein kinase superfamily. CAMK Ser/Thr protein kinase family. CaMK subfamily.

It carries out the reaction L-seryl-[myosin light chain] + ATP = O-phospho-L-seryl-[myosin light chain] + ADP + H(+). The enzyme catalyses L-threonyl-[myosin light chain] + ATP = O-phospho-L-threonyl-[myosin light chain] + ADP + H(+). Its activity is regulated as follows. Does not have a calmodulin-binding domain. Functionally, may phosphorylate a specific serine in the N-terminus of a myosin light chain. The sequence is that of Probable myosin light chain kinase DDB_G0275057 from Dictyostelium discoideum (Social amoeba).